The following is a 197-amino-acid chain: Probable chorismate pyruvate-lyase (197 aa).

Residues Arg-66, Leu-104, and Glu-169 each contribute to the substrate site.

This sequence belongs to the UbiC family.

It is found in the cytoplasm. It carries out the reaction chorismate = 4-hydroxybenzoate + pyruvate. It participates in cofactor biosynthesis; ubiquinone biosynthesis. Functionally, removes the pyruvyl group from chorismate, with concomitant aromatization of the ring, to provide 4-hydroxybenzoate (4HB) for the ubiquinone pathway. This Albidiferax ferrireducens (strain ATCC BAA-621 / DSM 15236 / T118) (Rhodoferax ferrireducens) protein is Probable chorismate pyruvate-lyase.